The primary structure comprises 686 residues: Secretin GspD 2 (686 aa).

The first 40 residues, 1–40 (MFWRDITLSVWRKKTTGLKTKKRLLPLVLAAALCSSPVWA), serve as a signal peptide directing secretion. Residues 41-140 (EEATFTANFK…VGEGSDNYAG (100 aa)) form an N0, contacts GspC2 region. The N1 stretch occupies residues 142–206 (EMVTKVVPVR…EVIQRVDHAG (65 aa)). Residues 207 to 279 (NRTEEVIPLD…LIRRLDSEME (73 aa)) are N2. Positions 282 to 357 (GNSQVFYLKY…SLQSVIEQLD (76 aa)) are N3. Residues 360 to 627 (RAQVHVEALI…VFIRPTILRD (268 aa)) form a secretin region. A cap gate region spans residues 414–433 (PQKGSTVISENGATTINPDT). A s domain, contacts AspS2 region spans residues 629–686 (MAADGVSQRKYNYMRAEQIYRDEQGLSLMPHTAQPVLPAQNQALPPEVRAFLNAGRTR).

Belongs to the bacterial secretin family. GSP D subfamily. In terms of assembly, forms a cylindrical channel with 15 subunits, each of which interacts with the surrounding pilotin AspS2 proteins (also called GspS-beta). Interacts with inner cell membrane protein GspC2 in the periplasm. Forms multimers in the outer membrane. The isolated N0 domain forms dimers that self-assemble into rings.

It is found in the cell outer membrane. Its function is as follows. Part of a type II secretion system (T2SS, formerly general secretion pathway, GSP) for the export of folded proteins across the outer membrane. This subunit forms the outer membrane channel. In Escherichia coli O78:H11 (strain H10407 / ETEC), this protein is Secretin GspD 2 (gspD2).